The primary structure comprises 265 residues: Mlc titration factor A (265 aa).

Zn(2+) is bound by residues His111, His148, His152, and Glu211.

This sequence belongs to the MtfA family. As to quaternary structure, interacts with Mlc. Zn(2+) is required as a cofactor.

The protein localises to the cytoplasm. In terms of biological role, involved in the modulation of the activity of the glucose-phosphotransferase system (glucose-PTS). Interacts with the transcriptional repressor Mlc, preventing its interaction with DNA and leading to the modulation of expression of genes regulated by Mlc, including ptsG, which encodes the PTS system glucose-specific EIICB component. Its function is as follows. Shows zinc-dependent metallopeptidase activity. The chain is Mlc titration factor A from Enterobacter sp. (strain 638).